The chain runs to 1080 residues: Histone-lysine N-methyltransferase, H3 lysine-4 specific (1080 aa).

Disordered stretches follow at residues 1–46, 54–73, and 78–121; these read MSNY…SQYN, NDGT…NNAS, and YATN…SSGS. Residues 1–230 form a binds SWD2 region; it reads MSNYYRRAHA…THRKCRNSLI (230 aa). A compositionally biased stretch (polar residues) spans 11–28; that stretch reads SSGSYRQPQEQPQYSRSG. Residues 29–46 show a composition bias toward low complexity; sequence HYQYSNGHSHQQYSSQYN. Positions 54-67 are enriched in basic and acidic residues; sequence NDGTRRRYNDDRPH. Polar residues-rich tracts occupy residues 78 to 87 and 99 to 121; these read YATNNSQSGP and RGMS…SSGS. Positions 230–569 are binds RNA; that stretch reads ILLPRISYDR…ALDHANFPEL (340 aa). The binds SHG1 stretch occupies residues 356 to 569; sequence KKLQKLQENL…ALDHANFPEL (214 aa). A Phosphoserine modification is found at Ser625. The interval 646-729 is disordered; that stretch reads AHLLNEETDS…DQNGSSDVLD (84 aa). Acidic residues predominate over residues 674-692; that stretch reads DEEDENMTSSSSEEEEEEA. Residues 693–712 are compositionally biased toward basic and acidic residues; sequence PDKKFKSESEPTTPESDHLH. Residues 762-938 are binds SPP1; that stretch reads MDLQNAIKDE…SLNQLNKRKK (177 aa). The contributes to RNA binding stretch occupies residues 762–938; sequence MDLQNAIKDE…SLNQLNKRKK (177 aa). The required for catalytic activity stretch occupies residues 762 to 938; it reads MDLQNAIKDE…SLNQLNKRKK (177 aa). Phosphothreonine is present on Thr875. 2 stretches are compositionally biased toward basic and acidic residues: residues 877–890 and 899–909; these read ELCQ…KEPS and SSRDNRASNRR. The tract at residues 877–909 is disordered; that stretch reads ELCQREESSNKEPSDSVPQEVSSSRDNRASNRR. The short motif at 904 to 909 is the RxxxRR motif element; the sequence is RASNRR. Residues 938–1055 form the SET domain; it reads KPVMFARSAI…ASEELTYDYK (118 aa). Residue Tyr1054 participates in S-adenosyl-L-methionine binding. A Post-SET domain is found at 1064–1080; the sequence is ERLPCLCGAPNCKGFLN.

This sequence belongs to the class V-like SAM-binding methyltransferase superfamily. As to quaternary structure, component of the Set1C/COMPASS complex which consists of SET1(2), BRE2(2), SPP1(2), SDC1(1), SHG1(1), SWD1(1), SWD2(1), and SWD3(1). Interacts with MEC3.

Its subcellular location is the nucleus. The protein localises to the chromosome. It carries out the reaction L-lysyl(4)-[histone H3] + 3 S-adenosyl-L-methionine = N(6),N(6),N(6)-trimethyl-L-lysyl(4)-[histone H3] + 3 S-adenosyl-L-homocysteine + 3 H(+). It catalyses the reaction N(6)-methyl-L-lysyl(4)-[histone H3] + S-adenosyl-L-methionine = N(6),N(6)-dimethyl-L-lysyl(4)-[histone H3] + S-adenosyl-L-homocysteine + H(+). The catalysed reaction is N(6),N(6)-dimethyl-L-lysyl(4)-[histone H3] + S-adenosyl-L-methionine = N(6),N(6),N(6)-trimethyl-L-lysyl(4)-[histone H3] + S-adenosyl-L-homocysteine + H(+). Catalytic component of the COMPASS (Set1C) complex that specifically mono-, di- and trimethylates histone H3 to form H3K4me1/2/3. Binds RNAs involved in chromosome segregation, splicing and transcriptional regulation; appears to bind transcripts both co- and post-transcriptionally and binding might negatively affect its histone methyltransferase activity. COMPASS recognizes ubiquitinated H2B on one face of the nucleosome which stimulates the methylation of H3 on the opposing face. Plays a role in telomere length maintenance and transcription elongation regulation. This chain is Histone-lysine N-methyltransferase, H3 lysine-4 specific, found in Saccharomyces cerevisiae (strain ATCC 204508 / S288c) (Baker's yeast).